Here is a 157-residue protein sequence, read N- to C-terminus: Lipoprotein signal peptidase (157 aa).

4 helical membrane-spanning segments follow: residues 10-30 (FIFIGVFLLIFGTDQAIKYAI), 36-56 (YESSIIDIVLVFNKGVAFSLL), 58-78 (FLEGSLKYLQILLILGLFIFL), and 84-104 (LFKAHTIEFGMVFGAGVSNIL). Catalysis depends on residues Asp-114 and Asp-131. Residues 123-143 (DFAIFNFADVMIDVGVGVLLI) form a helical membrane-spanning segment.

The protein belongs to the peptidase A8 family.

It localises to the cell inner membrane. The catalysed reaction is Release of signal peptides from bacterial membrane prolipoproteins. Hydrolyzes -Xaa-Yaa-Zaa-|-(S,diacylglyceryl)Cys-, in which Xaa is hydrophobic (preferably Leu), and Yaa (Ala or Ser) and Zaa (Gly or Ala) have small, neutral side chains.. The protein operates within protein modification; lipoprotein biosynthesis (signal peptide cleavage). This protein specifically catalyzes the removal of signal peptides from prolipoproteins. The polypeptide is Lipoprotein signal peptidase (Helicobacter acinonychis (strain Sheeba)).